Reading from the N-terminus, the 200-residue chain is dTTP/UTP pyrophosphatase (200 aa).

Asp80 acts as the Proton acceptor in catalysis.

Belongs to the Maf family. YhdE subfamily. Requires a divalent metal cation as cofactor.

The protein localises to the cytoplasm. It catalyses the reaction dTTP + H2O = dTMP + diphosphate + H(+). The catalysed reaction is UTP + H2O = UMP + diphosphate + H(+). In terms of biological role, nucleoside triphosphate pyrophosphatase that hydrolyzes dTTP and UTP. May have a dual role in cell division arrest and in preventing the incorporation of modified nucleotides into cellular nucleic acids. This Pasteurella multocida (strain Pm70) protein is dTTP/UTP pyrophosphatase.